The following is a 313-amino-acid chain: tRNA-cytidine(32) 2-sulfurtransferase (313 aa).

Residues 60–65 carry the PP-loop motif motif; the sequence is SGGKDS. The [4Fe-4S] cluster site is built by cysteine 135, cysteine 138, and cysteine 226.

It belongs to the TtcA family. Homodimer. The cofactor is Mg(2+). Requires [4Fe-4S] cluster as cofactor.

Its subcellular location is the cytoplasm. It catalyses the reaction cytidine(32) in tRNA + S-sulfanyl-L-cysteinyl-[cysteine desulfurase] + AH2 + ATP = 2-thiocytidine(32) in tRNA + L-cysteinyl-[cysteine desulfurase] + A + AMP + diphosphate + H(+). It functions in the pathway tRNA modification. Catalyzes the ATP-dependent 2-thiolation of cytidine in position 32 of tRNA, to form 2-thiocytidine (s(2)C32). The sulfur atoms are provided by the cysteine/cysteine desulfurase (IscS) system. This chain is tRNA-cytidine(32) 2-sulfurtransferase, found in Delftia acidovorans (strain DSM 14801 / SPH-1).